A 205-amino-acid chain; its full sequence is Peptidyl-prolyl cis-trans isomerase B (205 aa).

The N-terminal stretch at 1–20 (MKFSGLWCWLLLFLSVNVIA) is a signal peptide. The region spanning 39 to 198 (FFDIEHGEEK…EAVKIAKCGE (160 aa)) is the PPIase cyclophilin-type domain.

It belongs to the cyclophilin-type PPIase family. PPIase B subfamily.

It localises to the secreted. The catalysed reaction is [protein]-peptidylproline (omega=180) = [protein]-peptidylproline (omega=0). Cyclosporin A (CsA) inhibits CYPB. Its function is as follows. PPIases accelerate the folding of proteins. It catalyzes the cis-trans isomerization of proline imidic peptide bonds in oligopeptides. In Saccharomyces cerevisiae (strain ATCC 204508 / S288c) (Baker's yeast), this protein is Peptidyl-prolyl cis-trans isomerase B (CPR2).